Reading from the N-terminus, the 163-residue chain is Nucleotide-binding protein Mmcs_0777 (163 aa).

This sequence belongs to the YajQ family.

In terms of biological role, nucleotide-binding protein. The chain is Nucleotide-binding protein Mmcs_0777 from Mycobacterium sp. (strain MCS).